A 264-amino-acid polypeptide reads, in one-letter code: Diphthine synthase (264 aa).

Residues L10, D87, V90, 115–116 (SI), L166, A209, and H234 contribute to the S-adenosyl-L-methionine site.

This sequence belongs to the diphthine synthase family. Homodimer.

The catalysed reaction is 2-[(3S)-amino-3-carboxypropyl]-L-histidyl-[translation elongation factor 2] + 3 S-adenosyl-L-methionine = diphthine-[translation elongation factor 2] + 3 S-adenosyl-L-homocysteine + 3 H(+). It functions in the pathway protein modification; peptidyl-diphthamide biosynthesis. S-adenosyl-L-methionine-dependent methyltransferase that catalyzes the trimethylation of the amino group of the modified target histidine residue in translation elongation factor 2 (EF-2), to form an intermediate called diphthine. The three successive methylation reactions represent the second step of diphthamide biosynthesis. This chain is Diphthine synthase, found in Thermococcus onnurineus (strain NA1).